Here is a 146-residue protein sequence, read N- to C-terminus: Hemoglobin subunit beta (146 aa).

The Globin domain occupies H2–H146. Heme b is bound by residues H63 and H92.

This sequence belongs to the globin family. As to quaternary structure, heterotetramer of two alpha chains and two beta chains. In terms of tissue distribution, red blood cells.

Involved in oxygen transport from the lung to the various peripheral tissues. This is Hemoglobin subunit beta (HBB) from Aegypius monachus (Cinereous vulture).